The sequence spans 87 residues: Large ribosomal subunit protein eL34 (87 aa).

The protein belongs to the eukaryotic ribosomal protein eL34 family.

The polypeptide is Large ribosomal subunit protein eL34 (Sulfurisphaera tokodaii (strain DSM 16993 / JCM 10545 / NBRC 100140 / 7) (Sulfolobus tokodaii)).